Reading from the N-terminus, the 201-residue chain is 3-isopropylmalate dehydratase small subunit (201 aa).

This sequence belongs to the LeuD family. LeuD type 1 subfamily. As to quaternary structure, heterodimer of LeuC and LeuD.

The catalysed reaction is (2R,3S)-3-isopropylmalate = (2S)-2-isopropylmalate. It functions in the pathway amino-acid biosynthesis; L-leucine biosynthesis; L-leucine from 3-methyl-2-oxobutanoate: step 2/4. In terms of biological role, catalyzes the isomerization between 2-isopropylmalate and 3-isopropylmalate, via the formation of 2-isopropylmaleate. In Jannaschia sp. (strain CCS1), this protein is 3-isopropylmalate dehydratase small subunit.